Reading from the N-terminus, the 209-residue chain is Probable GTP-binding protein EngB (209 aa).

One can recognise an EngB-type G domain in the interval 23-198; it reads NGAEIAFAGR…EKVVAGWLVP (176 aa). GTP contacts are provided by residues 31–38, 58–62, 76–79, 143–146, and 177–179; these read GRSNAGKS, GRTQL, DLPG, TKSD, and FSS. Ser38 and Thr60 together coordinate Mg(2+).

This sequence belongs to the TRAFAC class TrmE-Era-EngA-EngB-Septin-like GTPase superfamily. EngB GTPase family. Requires Mg(2+) as cofactor.

In terms of biological role, necessary for normal cell division and for the maintenance of normal septation. The protein is Probable GTP-binding protein EngB of Azoarcus sp. (strain BH72).